Consider the following 620-residue polypeptide: Rhamnogalacturonan endolyase YesW (620 aa).

An N-terminal signal peptide occupies residues 1–37; the sequence is MRRSCLMIRRRKRMFTAVTLLVLLVMGTSVCPVKAEG. A disordered region spans residues 133-152; that stretch reads LDKPAGGTTPKGESYTYSAN. Asn152 is a binding site for substrate. Asp153, Asp158, Asp160, Asp162, Gln164, and Glu166 together coordinate Ca(2+). Position 172 (Asp172) interacts with substrate. A carbohydrate is bound by residues Asp187 and Lys207. Ca(2+) is bound by residues Asp222, Asp224, Asp226, Lys228, and Glu230. Residues Gly238 and Arg255 each contribute to the a carbohydrate site. 16 residues coordinate Ca(2+): His363, Asp369, Asp371, Asp373, Lys375, Glu377, Asp386, His387, His399, Asp401, Asp407, Asp409, Arg412, Gly414, Glu416, and Glu422. A substrate-binding site is contributed by Arg452. The Ca(2+) site is built by Asp457, Asp459, Tyr462, Gly464, Glu466, Asp496, Asp498, Leu500, and Glu502. 532-534 provides a ligand contact to substrate; that stretch reads NGT. The Ca(2+) site is built by Asp543, Leu545, Asp547, Arg549, Glu551, Asn592, and Ala594. Residue Tyr595 participates in substrate binding. Asn596 contributes to the Ca(2+) binding site.

It belongs to the polysaccharide lyase 11 family. As to quaternary structure, monomer. Ca(2+) serves as cofactor. It depends on Mn(2+) as a cofactor.

Its subcellular location is the secreted. It catalyses the reaction Endotype eliminative cleavage of L-alpha-rhamnopyranosyl-(1-&gt;4)-alpha-D-galactopyranosyluronic acid bonds of rhamnogalacturonan I domains in ramified hairy regions of pectin leaving L-rhamnopyranose at the reducing end and 4-deoxy-4,5-unsaturated D-galactopyranosyluronic acid at the non-reducing end.. Pectinolytic enzyme that degrades type I rhamnogalacturonan from plant cell walls and releases oligosaccharide products. Degrades rhamnogalacturonan, polygalacturonic acid, pectic acid and pectin. The sequence is that of Rhamnogalacturonan endolyase YesW (yesW) from Bacillus subtilis (strain 168).